The chain runs to 254 residues: Probable glutathione transferase omega-2 (254 aa).

One can recognise a GST N-terminal domain in the interval 25-105 (GTIRIYNMRY…YLDDIYPEPR (81 aa)). Cysteine 35 serves as the catalytic Nucleophile. Residues lysine 62, valine 75, and 89-90 (ES) contribute to the glutathione site. In terms of domain architecture, GST C-terminal spans 110–239 (DHYEKVQQKL…SQPTETAVEF (130 aa)).

The protein belongs to the GST superfamily. Omega family.

The enzyme catalyses RX + glutathione = an S-substituted glutathione + a halide anion + H(+). The catalysed reaction is L-dehydroascorbate + 2 glutathione = glutathione disulfide + L-ascorbate. It carries out the reaction methylarsonate + 2 glutathione + H(+) = methylarsonous acid + glutathione disulfide + H2O. In terms of biological role, exhibits glutathione-dependent thiol transferase activity. Has dehydroascorbate reductase activity and may contribute to the recycling of ascorbic acid. Participates in the biotransformation of inorganic arsenic and reduces monomethylarsonic acid (MMA). The protein is Probable glutathione transferase omega-2 (gsto-2) of Caenorhabditis elegans.